The primary structure comprises 381 residues: Transaldolase 2 (381 aa).

Lys141 serves as the catalytic Schiff-base intermediate with substrate.

This sequence belongs to the transaldolase family. Type 2 subfamily.

It is found in the cytoplasm. It carries out the reaction D-sedoheptulose 7-phosphate + D-glyceraldehyde 3-phosphate = D-erythrose 4-phosphate + beta-D-fructose 6-phosphate. It participates in carbohydrate degradation; pentose phosphate pathway; D-glyceraldehyde 3-phosphate and beta-D-fructose 6-phosphate from D-ribose 5-phosphate and D-xylulose 5-phosphate (non-oxidative stage): step 2/3. Its function is as follows. Transaldolase is important for the balance of metabolites in the pentose-phosphate pathway. This chain is Transaldolase 2 (tal2), found in Nostoc punctiforme (strain ATCC 29133 / PCC 73102).